The sequence spans 217 residues: Thiopurine S-methyltransferase (217 aa).

S-adenosyl-L-methionine contacts are provided by tryptophan 10, leucine 45, glutamate 66, and arginine 127.

It belongs to the class I-like SAM-binding methyltransferase superfamily. TPMT family.

It is found in the cytoplasm. It carries out the reaction S-adenosyl-L-methionine + a thiopurine = S-adenosyl-L-homocysteine + a thiopurine S-methylether.. The polypeptide is Thiopurine S-methyltransferase (Acinetobacter baylyi (strain ATCC 33305 / BD413 / ADP1)).